A 364-amino-acid chain; its full sequence is Poly(3-hydroxyalkanoate) polymerase subunit PhaE (364 aa).

The segment at serine 322–aspartate 364 is disordered. A compositionally biased stretch (low complexity) spans lysine 324–lysine 338.

This sequence belongs to the PHA/PHB synthase family. Type III PhaE subfamily. Forms a heterodimer with PhaC, which may multimerize in the presence of 3-hydroxybutyryl-CoA.

The protein localises to the cytoplasm. It functions in the pathway biopolymer metabolism; poly-(R)-3-hydroxybutanoate biosynthesis. Its function is as follows. Polymerizes D(-)-3-hydroxybutyryl-CoA to create polyhydroxybutyrate (PHB) which consists of thousands of hydroxybutyrate molecules linked end to end. This subunit has no catalytic activity but enhances the activity of PhaC, the catalytic subunit. This chain is Poly(3-hydroxyalkanoate) polymerase subunit PhaE, found in Thiocystis violacea.